Consider the following 244-residue polypeptide: Ribosomal RNA large subunit methyltransferase E (244 aa).

5 residues coordinate S-adenosyl-L-methionine: G81, W83, D109, D125, and D149. K189 serves as the catalytic Proton acceptor.

Belongs to the class I-like SAM-binding methyltransferase superfamily. RNA methyltransferase RlmE family.

The protein localises to the cytoplasm. It carries out the reaction uridine(2552) in 23S rRNA + S-adenosyl-L-methionine = 2'-O-methyluridine(2552) in 23S rRNA + S-adenosyl-L-homocysteine + H(+). In terms of biological role, specifically methylates the uridine in position 2552 of 23S rRNA at the 2'-O position of the ribose in the fully assembled 50S ribosomal subunit. This is Ribosomal RNA large subunit methyltransferase E from Cereibacter sphaeroides (strain ATCC 17023 / DSM 158 / JCM 6121 / CCUG 31486 / LMG 2827 / NBRC 12203 / NCIMB 8253 / ATH 2.4.1.) (Rhodobacter sphaeroides).